The following is an 80-amino-acid chain: Exodeoxyribonuclease 7 small subunit (80 aa).

Belongs to the XseB family. In terms of assembly, heterooligomer composed of large and small subunits.

It is found in the cytoplasm. The enzyme catalyses Exonucleolytic cleavage in either 5'- to 3'- or 3'- to 5'-direction to yield nucleoside 5'-phosphates.. Functionally, bidirectionally degrades single-stranded DNA into large acid-insoluble oligonucleotides, which are then degraded further into small acid-soluble oligonucleotides. This chain is Exodeoxyribonuclease 7 small subunit, found in Rickettsia felis (strain ATCC VR-1525 / URRWXCal2) (Rickettsia azadi).